The primary structure comprises 381 residues: 4-hydroxy-3-methylbut-2-en-1-yl diphosphate synthase (flavodoxin) (381 aa).

[4Fe-4S] cluster-binding residues include C273, C276, C308, and E315.

This sequence belongs to the IspG family. It depends on [4Fe-4S] cluster as a cofactor.

The catalysed reaction is (2E)-4-hydroxy-3-methylbut-2-enyl diphosphate + oxidized [flavodoxin] + H2O + 2 H(+) = 2-C-methyl-D-erythritol 2,4-cyclic diphosphate + reduced [flavodoxin]. The protein operates within isoprenoid biosynthesis; isopentenyl diphosphate biosynthesis via DXP pathway; isopentenyl diphosphate from 1-deoxy-D-xylulose 5-phosphate: step 5/6. Converts 2C-methyl-D-erythritol 2,4-cyclodiphosphate (ME-2,4cPP) into 1-hydroxy-2-methyl-2-(E)-butenyl 4-diphosphate. The protein is 4-hydroxy-3-methylbut-2-en-1-yl diphosphate synthase (flavodoxin) of Gluconobacter oxydans (strain 621H) (Gluconobacter suboxydans).